The following is a 207-amino-acid chain: Urease accessory protein UreG (207 aa).

A GTP-binding site is contributed by 12 to 19; it reads GPVGAGKT.

It belongs to the SIMIBI class G3E GTPase family. UreG subfamily. As to quaternary structure, homodimer. UreD, UreF and UreG form a complex that acts as a GTP-hydrolysis-dependent molecular chaperone, activating the urease apoprotein by helping to assemble the nickel containing metallocenter of UreC. The UreE protein probably delivers the nickel.

The protein resides in the cytoplasm. Functionally, facilitates the functional incorporation of the urease nickel metallocenter. This process requires GTP hydrolysis, probably effectuated by UreG. The polypeptide is Urease accessory protein UreG (Cereibacter sphaeroides (strain KD131 / KCTC 12085) (Rhodobacter sphaeroides)).